A 199-amino-acid chain; its full sequence is Octanoyltransferase (199 aa).

The 173-residue stretch at 27–199 (SNSCDELWLL…FVQYFLTQFK (173 aa)) folds into the BPL/LPL catalytic domain. Residues 66–73 (RGGQVTYH), 133–135 (SIG), and 146–148 (GIA) each bind substrate. The Acyl-thioester intermediate role is filled by Cys-164.

This sequence belongs to the LipB family.

The protein resides in the cytoplasm. It carries out the reaction octanoyl-[ACP] + L-lysyl-[protein] = N(6)-octanoyl-L-lysyl-[protein] + holo-[ACP] + H(+). The protein operates within protein modification; protein lipoylation via endogenous pathway; protein N(6)-(lipoyl)lysine from octanoyl-[acyl-carrier-protein]: step 1/2. Its function is as follows. Catalyzes the transfer of endogenously produced octanoic acid from octanoyl-acyl-carrier-protein onto the lipoyl domains of lipoate-dependent enzymes. Lipoyl-ACP can also act as a substrate although octanoyl-ACP is likely to be the physiological substrate. In Legionella pneumophila (strain Corby), this protein is Octanoyltransferase.